The primary structure comprises 523 residues: DNA primase (523 aa).

The segment at 37-61 (CPFHAEKTPSFFVNPLQGYFYCFGC) adopts a CHC2-type zinc-finger fold. The region spanning 259–340 (KSVILVEGYI…NVSVVRMDFG (82 aa)) is the Toprim domain. Residues E265, D309, and D311 each contribute to the Mg(2+) site.

The protein belongs to the DnaG primase family. Monomer. Interacts with DnaB. The cofactor is Zn(2+). Requires Mg(2+) as cofactor.

The catalysed reaction is ssDNA + n NTP = ssDNA/pppN(pN)n-1 hybrid + (n-1) diphosphate.. In terms of biological role, RNA polymerase that catalyzes the synthesis of short RNA molecules used as primers for DNA polymerase during DNA replication. This Borreliella burgdorferi (strain ATCC 35210 / DSM 4680 / CIP 102532 / B31) (Borrelia burgdorferi) protein is DNA primase.